A 468-amino-acid polypeptide reads, in one-letter code: Spliceosome-associated protein CWC27 homolog (468 aa).

An N-acetylserine modification is found at serine 2. Positions 11–166 (TNGKVLLKTT…NPHRIKSCEV (156 aa)) constitute a PPIase cyclophilin-type domain. Disordered stretches follow at residues 204 to 382 (LLSF…EDQT) and 427 to 468 (RKVK…KERR). Positions 206–229 (SFGEEAEEEEEEVNRVSQSMKGRS) form a coiled coil. A compositionally biased stretch (basic and acidic residues) spans 231 to 241 (SSHDLLKDDPH). The segment covering 256-268 (TGDLEDDAEDDSV) has biased composition (acidic residues). 2 stretches are compositionally biased toward basic and acidic residues: residues 269–287 (EHDGSMEEDEKNLMRERIA) and 302–342 (GDGE…AEKG). The residue at position 273 (serine 273) is a Phosphoserine. The stretch at 309 to 342 (ASRSEELRKEARQLKRELLAAKQKKESATKAEKG) forms a coiled coil. Serine 343 carries the phosphoserine modification. Basic and acidic residues-rich tracts occupy residues 356 to 368 (EYRREKQKYEALR) and 453 to 468 (RREESKKLLREKKERR).

It belongs to the cyclophilin-type PPIase family. In terms of assembly, part of the activated spliceosome B/catalytic step 1 spliceosome, one of the forms of the spliceosome which has a well-formed active site but still cannot catalyze the branching reaction and is composed at least of 52 proteins, the U2, U5 and U6 snRNAs and the pre-mRNA. Recruited during early steps of activated spliceosome B maturation, it is probably one of the first proteins released from this complex as he matures to the spliceosome C complex. Component of the minor spliceosome, which splices U12-type introns.

It is found in the nucleus. In terms of biological role, as part of the spliceosome, plays a role in pre-mRNA splicing. Probable inactive PPIase with no peptidyl-prolyl cis-trans isomerase activity. As a component of the minor spliceosome, involved in the splicing of U12-type introns in pre-mRNAs. In Rattus norvegicus (Rat), this protein is Spliceosome-associated protein CWC27 homolog.